The chain runs to 254 residues: Thiazole synthase (254 aa).

K96 acts as the Schiff-base intermediate with DXP in catalysis. Residues G157, A183–G184, and N205–T206 contribute to the 1-deoxy-D-xylulose 5-phosphate site.

It belongs to the ThiG family. As to quaternary structure, homotetramer. Forms heterodimers with either ThiH or ThiS.

The protein resides in the cytoplasm. The enzyme catalyses [ThiS sulfur-carrier protein]-C-terminal-Gly-aminoethanethioate + 2-iminoacetate + 1-deoxy-D-xylulose 5-phosphate = [ThiS sulfur-carrier protein]-C-terminal Gly-Gly + 2-[(2R,5Z)-2-carboxy-4-methylthiazol-5(2H)-ylidene]ethyl phosphate + 2 H2O + H(+). The protein operates within cofactor biosynthesis; thiamine diphosphate biosynthesis. Functionally, catalyzes the rearrangement of 1-deoxy-D-xylulose 5-phosphate (DXP) to produce the thiazole phosphate moiety of thiamine. Sulfur is provided by the thiocarboxylate moiety of the carrier protein ThiS. In vitro, sulfur can be provided by H(2)S. The polypeptide is Thiazole synthase (Bacillus velezensis (strain DSM 23117 / BGSC 10A6 / LMG 26770 / FZB42) (Bacillus amyloliquefaciens subsp. plantarum)).